Reading from the N-terminus, the 111-residue chain is Phosphoribosyl-ATP pyrophosphatase (111 aa).

Belongs to the PRA-PH family.

Its subcellular location is the cytoplasm. The enzyme catalyses 1-(5-phospho-beta-D-ribosyl)-ATP + H2O = 1-(5-phospho-beta-D-ribosyl)-5'-AMP + diphosphate + H(+). It participates in amino-acid biosynthesis; L-histidine biosynthesis; L-histidine from 5-phospho-alpha-D-ribose 1-diphosphate: step 2/9. This is Phosphoribosyl-ATP pyrophosphatase from Alcanivorax borkumensis (strain ATCC 700651 / DSM 11573 / NCIMB 13689 / SK2).